A 191-amino-acid chain; its full sequence is Holliday junction branch migration complex subunit RuvA (191 aa).

The interval M1–T64 is domain I. Positions D65–S145 are domain II. The segment at V146–S149 is flexible linker. Residues S149 to K191 form a domain III region.

This sequence belongs to the RuvA family. As to quaternary structure, homotetramer. Forms an RuvA(8)-RuvB(12)-Holliday junction (HJ) complex. HJ DNA is sandwiched between 2 RuvA tetramers; dsDNA enters through RuvA and exits via RuvB. An RuvB hexamer assembles on each DNA strand where it exits the tetramer. Each RuvB hexamer is contacted by two RuvA subunits (via domain III) on 2 adjacent RuvB subunits; this complex drives branch migration. In the full resolvosome a probable DNA-RuvA(4)-RuvB(12)-RuvC(2) complex forms which resolves the HJ.

Its subcellular location is the cytoplasm. In terms of biological role, the RuvA-RuvB-RuvC complex processes Holliday junction (HJ) DNA during genetic recombination and DNA repair, while the RuvA-RuvB complex plays an important role in the rescue of blocked DNA replication forks via replication fork reversal (RFR). RuvA specifically binds to HJ cruciform DNA, conferring on it an open structure. The RuvB hexamer acts as an ATP-dependent pump, pulling dsDNA into and through the RuvAB complex. HJ branch migration allows RuvC to scan DNA until it finds its consensus sequence, where it cleaves and resolves the cruciform DNA. The chain is Holliday junction branch migration complex subunit RuvA from Anaplasma phagocytophilum (strain HZ).